Here is a 436-residue protein sequence, read N- to C-terminus: Packaging protein UL32 (436 aa).

The Zn(2+) site is built by C52, C55, H129, C135, C182, C183, C266, C269, H335, C342, C384, and H421. Zinc finger stretches follow at residues 52 to 135, 182 to 421, and 266 to 342; these read CKIC…IHRC, CCNN…SKKH, and CPLC…DPQC.

This sequence belongs to the herpesviridae UL32 protein family.

Its subcellular location is the host cytoplasm. It localises to the host nucleus. In terms of biological role, plays a role in efficient localization of neo-synthesized capsids to nuclear replication compartments, thereby controlling cleavage and packaging of virus genomic DNA. The polypeptide is Packaging protein UL32 (68) (Saimiriine herpesvirus 2 (strain 11) (SaHV-2)).